The sequence spans 469 residues: Aspartyl/glutamyl-tRNA(Asn/Gln) amidotransferase subunit B (469 aa).

This sequence belongs to the GatB/GatE family. GatB subfamily. As to quaternary structure, heterotrimer of A, B and C subunits.

It carries out the reaction L-glutamyl-tRNA(Gln) + L-glutamine + ATP + H2O = L-glutaminyl-tRNA(Gln) + L-glutamate + ADP + phosphate + H(+). The catalysed reaction is L-aspartyl-tRNA(Asn) + L-glutamine + ATP + H2O = L-asparaginyl-tRNA(Asn) + L-glutamate + ADP + phosphate + 2 H(+). Allows the formation of correctly charged Asn-tRNA(Asn) or Gln-tRNA(Gln) through the transamidation of misacylated Asp-tRNA(Asn) or Glu-tRNA(Gln) in organisms which lack either or both of asparaginyl-tRNA or glutaminyl-tRNA synthetases. The reaction takes place in the presence of glutamine and ATP through an activated phospho-Asp-tRNA(Asn) or phospho-Glu-tRNA(Gln). The chain is Aspartyl/glutamyl-tRNA(Asn/Gln) amidotransferase subunit B from Methanococcus maripaludis (strain DSM 14266 / JCM 13030 / NBRC 101832 / S2 / LL).